The primary structure comprises 121 residues: MSTNKRRTIQIEITEEHFKDLEKALEALKGTQLPFSTTVEQFVELILSNYVATSNKISNLAESGFDVASIQQELEKIGSAAGADDALKSFLDELLKTSQKSFSNTKDGKKNDDDNNSSSKS.

The segment at Lys-100 to Ser-121 is disordered.

This is an uncharacterized protein from Mycoplasma pneumoniae (strain ATCC 29342 / M129 / Subtype 1) (Mycoplasmoides pneumoniae).